Here is a 91-residue protein sequence, read N- to C-terminus: Small ribosomal subunit protein uS15c (91 aa).

It belongs to the universal ribosomal protein uS15 family. Part of the 30S ribosomal subunit.

It localises to the plastid. It is found in the chloroplast. The sequence is that of Small ribosomal subunit protein uS15c (rps15) from Phalaenopsis aphrodite subsp. formosana (Moth orchid).